Reading from the N-terminus, the 166-residue chain is Small ribosomal subunit protein uS5 (166 aa).

The S5 DRBM domain maps to 11-74 (LQEKLIAVNR…EKARRNMKTV (64 aa)).

This sequence belongs to the universal ribosomal protein uS5 family. Part of the 30S ribosomal subunit. Contacts proteins S4 and S8.

In terms of biological role, with S4 and S12 plays an important role in translational accuracy. Located at the back of the 30S subunit body where it stabilizes the conformation of the head with respect to the body. This is Small ribosomal subunit protein uS5 from Photorhabdus laumondii subsp. laumondii (strain DSM 15139 / CIP 105565 / TT01) (Photorhabdus luminescens subsp. laumondii).